We begin with the raw amino-acid sequence, 58 residues long: Large ribosomal subunit protein bL32 (58 aa).

Belongs to the bacterial ribosomal protein bL32 family.

In Synechococcus sp. (strain WH7803), this protein is Large ribosomal subunit protein bL32.